Reading from the N-terminus, the 207-residue chain is Small heat shock protein hspG7 (207 aa).

The region spanning 30–207 (KTIIDILPPM…YSNTIKININ (178 aa)) is the sHSP domain. Low complexity-rich tracts occupy residues 84-101 (QQQQ…SSST) and 122-135 (STTS…ATTT). Positions 84 to 149 (QQQQLVIEKS…EDENKTKSSD (66 aa)) are disordered. A compositionally biased stretch (basic and acidic residues) spans 136-149 (KENKEDENKTKSSD).

The protein belongs to the small heat shock protein (HSP20) family.

The chain is Small heat shock protein hspG7 (hspG7) from Dictyostelium discoideum (Social amoeba).